Reading from the N-terminus, the 753-residue chain is 5-methyltetrahydropteroyltriglutamate--homocysteine methyltransferase (753 aa).

5-methyltetrahydropteroyltri-L-glutamate is bound by residues 17 to 20 (RELK) and Lys-117. Residues 431 to 433 (IGS) and Glu-484 contribute to the L-homocysteine site. L-methionine-binding positions include 431–433 (IGS) and Glu-484. 5-methyltetrahydropteroyltri-L-glutamate is bound by residues 515–516 (RC) and Trp-561. Asp-599 lines the L-homocysteine pocket. Residue Asp-599 coordinates L-methionine. Position 605 (Glu-605) interacts with 5-methyltetrahydropteroyltri-L-glutamate. Residues His-641, Cys-643, and Glu-665 each coordinate Zn(2+). His-694 functions as the Proton donor in the catalytic mechanism. Cys-726 contributes to the Zn(2+) binding site.

It belongs to the vitamin-B12 independent methionine synthase family. It depends on Zn(2+) as a cofactor.

It carries out the reaction 5-methyltetrahydropteroyltri-L-glutamate + L-homocysteine = tetrahydropteroyltri-L-glutamate + L-methionine. It participates in amino-acid biosynthesis; L-methionine biosynthesis via de novo pathway; L-methionine from L-homocysteine (MetE route): step 1/1. Functionally, catalyzes the transfer of a methyl group from 5-methyltetrahydrofolate to homocysteine resulting in methionine formation. The protein is 5-methyltetrahydropteroyltriglutamate--homocysteine methyltransferase of Escherichia coli O157:H7 (strain EC4115 / EHEC).